The following is a 119-amino-acid chain: Large ribosomal subunit protein bL20 (119 aa).

This sequence belongs to the bacterial ribosomal protein bL20 family.

Functionally, binds directly to 23S ribosomal RNA and is necessary for the in vitro assembly process of the 50S ribosomal subunit. It is not involved in the protein synthesizing functions of that subunit. The polypeptide is Large ribosomal subunit protein bL20 (Bordetella avium (strain 197N)).